The primary structure comprises 361 residues: Histidinol-phosphate aminotransferase (361 aa).

An N6-(pyridoxal phosphate)lysine modification is found at Lys219.

It belongs to the class-II pyridoxal-phosphate-dependent aminotransferase family. Histidinol-phosphate aminotransferase subfamily. Homodimer. Pyridoxal 5'-phosphate is required as a cofactor.

It carries out the reaction L-histidinol phosphate + 2-oxoglutarate = 3-(imidazol-4-yl)-2-oxopropyl phosphate + L-glutamate. It functions in the pathway amino-acid biosynthesis; L-histidine biosynthesis; L-histidine from 5-phospho-alpha-D-ribose 1-diphosphate: step 7/9. This chain is Histidinol-phosphate aminotransferase, found in Cereibacter sphaeroides (strain KD131 / KCTC 12085) (Rhodobacter sphaeroides).